The chain runs to 762 residues: MLLSLTFPVLRGCTGHLVNRSLQAPRWRVTWKRSYSLLQDEVKSLRTVVNPDISKIRNIGIMAHIDAGKTTTTERMLYYSGYTRALGDVDDGDTVTDYMAQERERGITIQSAAVTFDWKDYRINLIDTPGHVDFTLEVERALRVLDGAVAVFDASAGVEAQTMTVWRQAEKHQIPCVCFLNKMDKPAASLRYSLDSIKAKLKANPVLLQIPIGSGKSFTGLVDLITRQKMMWQGNALTNDGRSFEINSLQPSDDPNVLLAVSEARAALIEQVADLDDDFAELLLGEYGENFDAVPAVKLQEAVRRVTLARKGVPVLCGSSLKNKGVQPLLDAITAYLPAPNERNHDLVRWYKNDLCALAFKVVHDKQRGPLVFVRIYSGSMKAQSSVHNINRNETEKMSRLLLPFADQQIEIPSLSAGNIALTVGLKQTVTGDTIVSSKASAAAAIRRAQAEAESRSNSHSAALAGVEVPEPVFFCSIEPPTMAKQADLEHALNCLQREDPSLKVRIDPDSGQTVLCGMGELHIEIIHDRIKREYKIETHLGPLQVAYRETILQSATAKDLLDRILGEKRHVVSVELTVHPLKENSSASCDITFEEDVKAMLPADVREAVENGVQSAYLQGPVLGFPVQGVQTVIQNVRLESGTSAAMVSACVSRCMLKALKQAGGQVLEPVMALEVTVGEEHLSSVLADLSQRRGTICDIQSRQDNKILLADVPLAEMMGYSTVLRTLTSGNATFSLELSSYEPMNSQDQNILLNKMAGLT.

The transit peptide at 1–35 (MLLSLTFPVLRGCTGHLVNRSLQAPRWRVTWKRSY) directs the protein to the mitochondrion. A tr-type G domain is found at 54 to 341 (SKIRNIGIMA…AITAYLPAPN (288 aa)). Residues 63–70 (AHIDAGKT), 127–131 (DTPGH), and 181–184 (NKMD) each bind GTP.

The protein belongs to the TRAFAC class translation factor GTPase superfamily. Classic translation factor GTPase family. EF-G/EF-2 subfamily.

It localises to the mitochondrion. It carries out the reaction GTP + H2O = GDP + phosphate + H(+). Mitochondrial GTPase that mediates the disassembly of ribosomes from messenger RNA at the termination of mitochondrial protein biosynthesis. Acts in collaboration with mrrf. GTP hydrolysis follows the ribosome disassembly and probably occurs on the ribosome large subunit. Not involved in the GTP-dependent ribosomal translocation step during translation elongation. The sequence is that of Ribosome-releasing factor 2, mitochondrial (gfm2) from Danio rerio (Zebrafish).